We begin with the raw amino-acid sequence, 530 residues long: Ubiquitin carboxyl-terminal hydrolase 17-like protein 1 (530 aa).

One can recognise a USP domain in the interval 80–375 (AGLQNMGNTC…QAYVLFYIQK (296 aa)). Catalysis depends on Cys89, which acts as the Nucleophile. His334 serves as the catalytic Proton acceptor. 2 stretches are compositionally biased toward basic and acidic residues: residues 382–392 (SESVSRGREPR) and 398–411 (DTDR…LKRD). The disordered stretch occupies residues 382–411 (SESVSRGREPRALGAEDTDRRAKQGELKRD).

It belongs to the peptidase C19 family. USP17 subfamily.

The protein localises to the nucleus. It is found in the endoplasmic reticulum. It catalyses the reaction Thiol-dependent hydrolysis of ester, thioester, amide, peptide and isopeptide bonds formed by the C-terminal Gly of ubiquitin (a 76-residue protein attached to proteins as an intracellular targeting signal).. Deubiquitinating enzyme that removes conjugated ubiquitin from specific proteins to regulate different cellular processes that may include cell proliferation, progression through the cell cycle, apoptosis, cell migration, and the cellular response to viral infection. This is Ubiquitin carboxyl-terminal hydrolase 17-like protein 1 (USP17L1) from Homo sapiens (Human).